The primary structure comprises 1049 residues: Toll-like receptor 7 (1049 aa).

An N-terminal signal peptide occupies residues 1–26; it reads MVFPMWTLKRQILILFNIILISKLLG. At 27 to 839 the chain is on the extracellular side; sequence ARWFPKTLPC…LYTCELDLTN (813 aa). LRR repeat units lie at residues 43 to 64, 65 to 87, 110 to 126, 127 to 149, 151 to 170, and 171 to 195; these read PKNHVIVDCTDKHLTEIPGGIP, TNTTNLTLTINHIPDISPASFHR, NMCIKRLQIKPRSFSGL, TYLKSLYLDGNQLLEIPQGLPPS, QLLSLEANNIFSIRKENLTE, and LANIEILYLGQNCYYRNPCYVSYSI. Asn66 and Asn69 each carry an N-linked (GlcNAc...) asparagine glycan. Residue Asn167 is glycosylated (N-linked (GlcNAc...) asparagine). Residues Asn202 and Asn215 are each glycosylated (N-linked (GlcNAc...) asparagine). 9 LRR repeats span residues 203-226, 228-247, 248-275, 289-312, 314-337, 339-368, 369-392, 396-419, and 421-443; these read LTKLKVLSLKDNNVTAVPTVLPST, TELYLYNNMIAKIQEDDFNN, LNQLQILDLSGNCPRCYNAPFPCAPCKN, LTELKVLRLHSNSLQHVPPRWFKN, NKLQELDLSQNFLAKEIGDAKFLH, LPSLIQLDLSFNFELQVYRASMNLSQAFSS, LKSLKILRIRGYVFKELKSFNLSP, LQNLEVLDLGTNFIKIANLSMFKQ, and KRLKVIDLSVNKISPSGDSSEVG. A glycan (N-linked (GlcNAc...) asparagine) is linked at Asn361. Asn413 is a glycosylation site (N-linked (GlcNAc...) asparagine). N-linked (GlcNAc...) asparagine glycosylation occurs at Asn488. LRR repeat units lie at residues 492 to 515, 516 to 540, 541 to 564, and 566 to 588; these read YKYGQTLDLSKNSIFFVKSSDFQH, LSFLKCLNLSGNLISQTLNGSEFQP, LAELRYLDFSNNRLDLLHSTAFEE, and HKLEVLDISSNSHYFQSEGITHM. Residues Asn523 and Asn534 are each glycosylated (N-linked (GlcNAc...) asparagine). Asn590 carries N-linked (GlcNAc...) asparagine glycosylation. LRR repeat units lie at residues 595 to 618, 619 to 644, 649 to 672, 674 to 697, 698 to 721, 723 to 745, 746 to 769, and 772 to 795; these read LKVLQKLMMNDNDISSSTSRTMES, ESLRTLEFRGNHLDVLWREGDNRYLQ, LLKLEELDISKNSLSFLPSGVFDG, PPNLKNLSLAKNGLKSFSWKKLQC, LKNLETLDLSHNQLTTVPERLSNC, RSLKNLILKNNQIRSLTKYFLQD, AFQLRYLDLSSNKIQMIQKTSFPE, and LNNLKMLLLHHNRFLCTCDAVWFV. Residues Asn679 and Asn720 are each glycosylated (N-linked (GlcNAc...) asparagine). Asn799 carries N-linked (GlcNAc...) asparagine glycosylation. A helical membrane pass occupies residues 840–860; the sequence is LILFSLSISVSLFLMVMMTAS. Residues 861–1049 are Cytoplasmic-facing; it reads HLYFWDVWYI…AYSQVFKETV (189 aa). The region spanning 889 to 1033 is the TIR domain; it reads CCYDAFIVYD…YFWQCLKNAL (145 aa).

The protein belongs to the Toll-like receptor family. In terms of assembly, homodimer. Interacts with MYD88 via their respective TIR domains. Interacts with UNC93B1. Interacts with SMPDL3B. In terms of tissue distribution, detected in brain, placenta, spleen, stomach, small intestine, lung and in plasmacytoid pre-dendritic cells. Expressed in peripheral mononuclear blood cells.

The protein resides in the endoplasmic reticulum membrane. Its subcellular location is the endosome. It is found in the lysosome. The protein localises to the cytoplasmic vesicle. It localises to the phagosome. With respect to regulation, activated by guanosine analogs including deoxyguanosine, 7-thia-8-oxoguanosine or 7-deazaguanosine in a RNA-independent manner. Activated by imiquimod. In terms of biological role, endosomal receptor that plays a key role in innate and adaptive immunity. Controls host immune response against pathogens through recognition of uridine-containing single strand RNAs (ssRNAs) of viral origin or guanosine analogs. Upon binding to agonists, undergoes dimerization that brings TIR domains from the two molecules into direct contact, leading to the recruitment of TIR-containing downstream adapter MYD88 through homotypic interaction. In turn, the Myddosome signaling complex is formed involving IRAK4, IRAK1, TRAF6, TRAF3 leading to activation of downstream transcription factors NF-kappa-B and IRF7 to induce pro-inflammatory cytokines and interferons, respectively. In plasmacytoid dendritic cells, RNASET2 endonuclease cooperates with PLD3 or PLD4 5'-&gt;3' exonucleases to process RNA and release 2',3'-cyclic guanosine monophosphate (2',3'-cGMP) and cytidine-rich RNA fragments that occupy TLR7 ligand-binding pockets and trigger a signaling-competent state. This Homo sapiens (Human) protein is Toll-like receptor 7.